A 299-amino-acid polypeptide reads, in one-letter code: Lathosterol oxidase (299 aa).

The next 3 helical transmembrane spans lie at 32-52 (ISLLIVTNLGAYILYFFCATL), 79-99 (FTVKSLPWISIPTVSLFLLEL), and 117-137 (IHLMVSVVSFLFFTDMLIYWI). The Fatty acid hydroxylase domain occupies 124–252 (VSFLFFTDML…YFTLWDRIGG (129 aa)). The Histidine box-1 signature appears at 138–143 (HRGLHH). The Histidine box-2 signature appears at 151-155 (HKPHH). Residues 186-206 (VFPLHKVVYLGLYVLVNVWTI) form a helical membrane-spanning segment. The short motif at 228–233 (HHTDHH) is the Histidine box-3 element. Ser-253 carries the phosphoserine modification. The segment at 280–299 (FAENGCKGKKVGNGEFTKNK) is disordered.

It belongs to the sterol desaturase family. It depends on Fe cation as a cofactor.

The protein resides in the endoplasmic reticulum membrane. It catalyses the reaction a Delta(7)-sterol + 2 Fe(II)-[cytochrome b5] + O2 + 2 H(+) = a Delta(5),Delta(7)-sterol + 2 Fe(III)-[cytochrome b5] + 2 H2O. The enzyme catalyses lathosterol + 2 Fe(II)-[cytochrome b5] + O2 + 2 H(+) = 7-dehydrocholesterol + 2 Fe(III)-[cytochrome b5] + 2 H2O. The catalysed reaction is 5alpha-cholesta-7,24-dien-3beta-ol + 2 Fe(II)-[cytochrome b5] + O2 + 2 H(+) = 7-dehydrodesmosterol + 2 Fe(III)-[cytochrome b5] + 2 H2O. The protein operates within steroid biosynthesis; cholesterol biosynthesis. Catalyzes the penultimate step of the biosynthesis of cholesterol, the dehydrogenation of lathosterol into 7-dehydrocholesterol (7-DHC). Cholesterol is the major sterol component in mammalian membranes and a precursor for bile acid and steroid hormone synthesis. In addition to its essential role in cholesterol biosynthesis, it also indirectly regulates ferroptosis through the production of 7-DHC. By diverting the spread of damage caused by peroxyl radicals from the phospholipid components to its sterol nucleus, 7-DHC prevents this form of cell death. The protein is Lathosterol oxidase of Mus musculus (Mouse).